Consider the following 122-residue polypeptide: MAFDKDTIIASLKEASITDLSDLVKAIEDEFGVSAAAPVAAAGAAGGDAAGAKDSFDVEMTESGDAKVKAIKAVREITGLGLKDAKGLVDNVPSVIKEGVSEDEANDIKEKLEAVGAVVTLK.

The protein belongs to the bacterial ribosomal protein bL12 family. Homodimer. Part of the ribosomal stalk of the 50S ribosomal subunit. Forms a multimeric L10(L12)X complex, where L10 forms an elongated spine to which 2 to 4 L12 dimers bind in a sequential fashion. Binds GTP-bound translation factors.

In terms of biological role, forms part of the ribosomal stalk which helps the ribosome interact with GTP-bound translation factors. Is thus essential for accurate translation. The chain is Large ribosomal subunit protein bL12 from Levilactobacillus brevis (strain ATCC 367 / BCRC 12310 / CIP 105137 / JCM 1170 / LMG 11437 / NCIMB 947 / NCTC 947) (Lactobacillus brevis).